A 723-amino-acid chain; its full sequence is Protein Aster-A (723 aa).

Over residues 1 to 18 (MFDTTPHSGRSSPSSSPS) the composition is skewed to low complexity. The interval 1-63 (MFDTTPHSGR…SGVSGTLSTQ (63 aa)) is disordered. Residues 28–38 (PSRPPSAPEPE) show a composition bias toward pro residues. The GRAM domain occupies 93 to 160 (EDFRKLFSKL…KEVTCLKKEK (68 aa)). The tract at residues 257-337 (SPSGAADRSQ…DGPTSNLGPL (81 aa)) is disordered. Phosphoserine occurs at positions 265, 269, and 273. Residues 302–314 (DSQLDASSSQTVT) are compositionally biased toward polar residues. Residues 370 to 541 (SGRLLINSVF…ELAKAEKVSL (172 aa)) form the VASt domain. Serine 418 carries the post-translational modification Phosphoserine. The tract at residues 562 to 601 (LSWRGHRDGPQHPDPDPCTQTSMHTSGSLSSRFSEPSVDQ) is disordered. Basic and acidic residues predominate over residues 566 to 576 (GHRDGPQHPDP). Residues 579 to 595 (CTQTSMHTSGSLSSRFS) are compositionally biased toward polar residues. Residues 610 to 630 (ALVLISIVLIVLIALNALLFY) form a helical membrane-spanning segment.

The protein resides in the endoplasmic reticulum membrane. The protein localises to the cell membrane. It is found in the cytoplasmic vesicle. Its subcellular location is the autophagosome. Cholesterol transporter that mediates non-vesicular transport of cholesterol from the plasma membrane (PM) to the endoplasmic reticulum (ER). Contains unique domains for binding cholesterol and the PM, thereby serving as a molecular bridge for the transfer of cholesterol from the PM to the ER. Plays a crucial role in cholesterol homeostasis and has the unique ability to localize to the PM based on the level of membrane cholesterol. In lipid-poor conditions localizes to the ER membrane and in response to excess cholesterol in the PM is recruited to the endoplasmic reticulum-plasma membrane contact sites (EPCS) which is mediated by the GRAM domain. At the EPCS, the sterol-binding VASt/ASTER domain binds to the cholesterol in the PM and facilitates its transfer from the PM to ER. May play a role in tumor progression. Plays a role in autophagy regulation and is required for biogenesis of the autophagosome. This function in autophagy requires its cholesterol-transfer activity. The sequence is that of Protein Aster-A from Rattus norvegicus (Rat).